A 156-amino-acid polypeptide reads, in one-letter code: MKVMVIQGPNLNMLGIREQHIYGPMKLEDIHKQMKNFADANGLDIEFFQSNLEGEIVDKIQESLGDADGIIINAGAYTHTSIAIRDAIAAVQLPTIEVHLSNVYRREEFRQKSMIAPVCAGVITGFGPFSYHLAMVAMHQIFQEIEALKAQQPQQA.

The Proton acceptor role is filled by Tyr22. Substrate is bound by residues Asn73, His79, and Asp86. Residue His99 is the Proton donor of the active site. Substrate-binding positions include 100–101 (LS) and Arg110.

Belongs to the type-II 3-dehydroquinase family. Homododecamer.

The catalysed reaction is 3-dehydroquinate = 3-dehydroshikimate + H2O. It participates in metabolic intermediate biosynthesis; chorismate biosynthesis; chorismate from D-erythrose 4-phosphate and phosphoenolpyruvate: step 3/7. In terms of biological role, catalyzes a trans-dehydration via an enolate intermediate. The protein is 3-dehydroquinate dehydratase of Nitratiruptor sp. (strain SB155-2).